The chain runs to 144 residues: MQLNTLSPAQGEKKSRKRVGRGIGSGIGKTCGSGHKGQKSRSGGFNKIGFEGGQMPLQRRLPKVGFSSRISIITSQVTLSEINRLTETYITIDVFKAHNLITKNIKRVKVILSGEITRAVTLTGIKVTKGAKLAIEAVKGSVSD.

A disordered region spans residues 1 to 51 (MQLNTLSPAQGEKKSRKRVGRGIGSGIGKTCGSGHKGQKSRSGGFNKIGFE). Residues 21-35 (RGIGSGIGKTCGSGH) show a composition bias toward gly residues.

This sequence belongs to the universal ribosomal protein uL15 family. As to quaternary structure, part of the 50S ribosomal subunit.

Its function is as follows. Binds to the 23S rRNA. This Vesicomyosocius okutanii subsp. Calyptogena okutanii (strain HA) protein is Large ribosomal subunit protein uL15.